The sequence spans 868 residues: Receptor-like protein kinase At5g59670 (868 aa).

The N-terminal stretch at 1–22 (MESSFGLLLALLTLTIIHIVQA) is a signal peptide. Residues 23–500 (QDPQGFISLD…PRLIKPPKKE (478 aa)) are Extracellular-facing. Residues asparagine 38, asparagine 94, asparagine 141, asparagine 287, asparagine 300, asparagine 372, asparagine 405, asparagine 416, asparagine 423, asparagine 445, asparagine 464, and asparagine 471 are each glycosylated (N-linked (GlcNAc...) asparagine). 3 LRR repeats span residues 409 to 432 (PPRI…AIQS), 433 to 459 (ITQL…KMKS), and 461 to 481 (SVIN…LRKK). A helical transmembrane segment spans residues 501–521 (FPVAIVTLVVFVTVIVVLFLV). Topologically, residues 522 to 868 (FRKKMSTIVK…LDTTAVPMAR (347 aa)) are cytoplasmic. Threonine 555 carries the phosphothreonine modification. One can recognise a Protein kinase domain in the interval 564-834 (KNFQRVLGKG…SMSQVIHELK (271 aa)). ATP contacts are provided by residues 570 to 578 (LGKGGFGMV) and lysine 592. The residue at position 637 (tyrosine 637) is a Phosphotyrosine. Residue aspartate 689 is the Proton acceptor of the active site. Position 723 is a phosphoserine (serine 723). Threonine 724 and threonine 729 each carry phosphothreonine.

This sequence belongs to the protein kinase superfamily. Ser/Thr protein kinase family. In terms of processing, autophosphorylated on Tyr and Thr residues.

Its subcellular location is the cell membrane. The catalysed reaction is L-seryl-[protein] + ATP = O-phospho-L-seryl-[protein] + ADP + H(+). It carries out the reaction L-threonyl-[protein] + ATP = O-phospho-L-threonyl-[protein] + ADP + H(+). The enzyme catalyses L-tyrosyl-[protein] + ATP = O-phospho-L-tyrosyl-[protein] + ADP + H(+). Probable receptor with a dual specificity kinase activity acting on both serine/threonine- and tyrosine-containing substrates. In Arabidopsis thaliana (Mouse-ear cress), this protein is Receptor-like protein kinase At5g59670.